Consider the following 234-residue polypeptide: 2-C-methyl-D-erythritol 4-phosphate cytidylyltransferase (234 aa).

The protein belongs to the IspD/TarI cytidylyltransferase family. IspD subfamily.

It carries out the reaction 2-C-methyl-D-erythritol 4-phosphate + CTP + H(+) = 4-CDP-2-C-methyl-D-erythritol + diphosphate. It participates in isoprenoid biosynthesis; isopentenyl diphosphate biosynthesis via DXP pathway; isopentenyl diphosphate from 1-deoxy-D-xylulose 5-phosphate: step 2/6. In terms of biological role, catalyzes the formation of 4-diphosphocytidyl-2-C-methyl-D-erythritol from CTP and 2-C-methyl-D-erythritol 4-phosphate (MEP). The sequence is that of 2-C-methyl-D-erythritol 4-phosphate cytidylyltransferase from Shewanella sediminis (strain HAW-EB3).